Here is a 323-residue protein sequence, read N- to C-terminus: Acetyl esterase (323 aa).

Positions 91–93 match the Involved in the stabilization of the negatively charged intermediate by the formation of the oxyanion hole motif; that stretch reads HGG. Catalysis depends on residues S165, D262, and H292.

It belongs to the 'GDXG' lipolytic enzyme family. In terms of assembly, homodimer. Interacts with MalT and MelA.

It localises to the cytoplasm. In terms of biological role, displays esterase activity towards short chain fatty esters (acyl chain length of up to 8 carbons). Able to hydrolyze triacetylglycerol (triacetin) and tributyrylglycerol (tributyrin), but not trioleylglycerol (triolein) or cholesterol oleate. Negatively regulates MalT activity by antagonizing maltotriose binding. Inhibits MelA galactosidase activity. In Salmonella paratyphi A (strain ATCC 9150 / SARB42), this protein is Acetyl esterase.